A 273-amino-acid polypeptide reads, in one-letter code: Probable branched-chain-amino-acid aminotransferase (273 aa).

N6-(pyridoxal phosphate)lysine is present on K133.

The protein belongs to the class-IV pyridoxal-phosphate-dependent aminotransferase family. Pyridoxal 5'-phosphate serves as cofactor.

It catalyses the reaction L-leucine + 2-oxoglutarate = 4-methyl-2-oxopentanoate + L-glutamate. The enzyme catalyses L-isoleucine + 2-oxoglutarate = (S)-3-methyl-2-oxopentanoate + L-glutamate. The catalysed reaction is L-valine + 2-oxoglutarate = 3-methyl-2-oxobutanoate + L-glutamate. Its pathway is amino-acid biosynthesis; L-isoleucine biosynthesis; L-isoleucine from 2-oxobutanoate: step 4/4. The protein operates within amino-acid biosynthesis; L-leucine biosynthesis; L-leucine from 3-methyl-2-oxobutanoate: step 4/4. It participates in amino-acid biosynthesis; L-valine biosynthesis; L-valine from pyruvate: step 4/4. Its function is as follows. Acts on leucine, isoleucine and valine. The sequence is that of Probable branched-chain-amino-acid aminotransferase (ilvE) from Thermotoga maritima (strain ATCC 43589 / DSM 3109 / JCM 10099 / NBRC 100826 / MSB8).